Consider the following 339-residue polypeptide: Protein FAM76B (339 aa).

Ala-2 is subject to N-acetylalanine. Ser-22 and Ser-148 each carry phosphoserine. Residues 144-243 (EQRKSLGSSH…INQSADSGGT (100 aa)) are disordered. Low complexity predominate over residues 148–160 (SLGSSHSNSSSSS). Residues 167–189 (HHSKHHHHHHHHHHRHSSGHHKV) show a composition bias toward basic residues. Ser-193 carries the phosphoserine modification. Thr-215 bears the Phosphothreonine mark. Basic and acidic residues predominate over residues 215–224 (TPKKKPKLES). The segment covering 228–243 (NGDSSSINQSADSGGT) has biased composition (polar residues). The stretch at 248–328 (LISQLKEEVM…QVAALSKGKK (81 aa)) forms a coiled coil.

Belongs to the FAM76 family. Interacts with HNRNPA2B1 (via C-terminus); the interaction results in retention of HNRNPA2B1 in the nucleus and inhibition of the NF-kappa-B-mediated inflammatory pathway.

Its subcellular location is the nucleus speckle. Its function is as follows. Negatively regulates the NF-kappa-B-mediated inflammatory pathway by preventing the translocation of HNRNPA2B1 from the nucleus to the cytoplasm. Inhibits the PI3K/Akt/NF-kappa-B pathway-mediated polarization of M1 macrophages by binding to and stabilizing PIK3CD mRNA, resulting in increased levels of PIK3CD protein and increased levels of phosphorylated downstream target AKT which leads to decreased NF-kappa-B signaling. The chain is Protein FAM76B (Fam76b) from Mus musculus (Mouse).